The primary structure comprises 66 residues: MSKMKTKSGAKKRFKLTASGKVKAGQAGKRHGMIKRTPKQIRNKRGQVTLSPQDAKIVKKYLPNGL.

Over residues 1-15 (MSKMKTKSGAKKRFK) the composition is skewed to basic residues. The interval 1–35 (MSKMKTKSGAKKRFKLTASGKVKAGQAGKRHGMIK) is disordered.

The protein belongs to the bacterial ribosomal protein bL35 family.

This is Large ribosomal subunit protein bL35 from Maricaulis maris (strain MCS10) (Caulobacter maris).